Reading from the N-terminus, the 136-residue chain is uncharacterized protein (136 aa).

This is an uncharacterized protein from Saccharomyces cerevisiae (strain ATCC 204508 / S288c) (Baker's yeast).